A 426-amino-acid polypeptide reads, in one-letter code: Egl nine homolog 1 (426 aa).

At A2 the chain carries N-acetylalanine. The required for nuclear export stretch occupies residues 6 to 20 (GGPGGPSPSERDRQY). S12 carries the phosphoserine modification. Zn(2+)-binding residues include C21, C24, C33, C36, C42, H46, H54, and C58. Residues 21–58 (CELCGKMENLLRCSRCRSSFYCCKEHQRQDWKKHKLVC) form an MYND-type; atypical zinc finger. Disordered stretches follow at residues 65–129 (LGHG…PCRA) and 160–184 (ANLYPPSNTPGDALSPGGGLRPNGQ). Residues 77-87 (PAPPAAVPPPR) show a composition bias toward pro residues. A compositionally biased stretch (basic and acidic residues) spans 89–103 (GAREPRKAAARRDNA). Residues 120 to 129 (PAAAASPCRA) show a composition bias toward low complexity. Phosphoserine is present on S125. S-nitrosocysteine occurs at positions 201 and 208. Positions 241–251 (VSQKSDSSKDI) are beta(2)beta(3) 'finger-like' loop. The Fe2OG dioxygenase domain maps to 291–392 (KINGRTKAMV…RYAITVWYFD (102 aa)). C302 is subject to S-nitrosocysteine. Positions 313 and 315 each coordinate Fe cation. 2 positions are modified to S-nitrosocysteine: C323 and C326. Residue H374 coordinates Fe cation. Position 383 (R383) interacts with 2-oxoglutarate.

Monomer. Interacts with ING4; the interaction inhibits the hydroxylation of HIF alpha proteins. Interacts with PTGES3 (via PXLE motif); thereby recruiting EGLN1 to the HSP90 pathway to facilitate HIF alpha proteins hydroxylation. Interacts with LIMD1. Found in a complex composed of LIMD1, VHL, EGLN1/PHD2, ELOB and CUL2. Interacts with EPAS1. Interacts with CBFA2T3. Interacts with HIF1A. Requires Fe(2+) as cofactor. The cofactor is L-ascorbate. In terms of processing, S-nitrosylation inhibits the enzyme activity up to 60% under aerobic conditions. Chelation of Fe(2+) has no effect on the S-nitrosylation. It is uncertain whether nitrosylation occurs on Cys-323 or Cys-326. In terms of tissue distribution, according to PubMed:11056053, widely expressed with highest levels in skeletal muscle and heart, moderate levels in pancreas, brain (dopaminergic neurons of adult and fetal substantia nigra) and kidney, and lower levels in lung and liver. According to PubMed:12351678 widely expressed with highest levels in brain, kidney and adrenal gland. Expressed in cardiac myocytes, aortic endothelial cells and coronary artery smooth muscle. According to PubMed:12788921; expressed in adult and fetal heart, brain, liver, lung, skeletal muscle and kidney. Also expressed in placenta. Highest levels in adult heart, brain, lung and liver and fetal brain, heart spleen and skeletal muscle.

The protein localises to the cytoplasm. The protein resides in the nucleus. It catalyses the reaction L-prolyl-[hypoxia-inducible factor alpha subunit] + 2-oxoglutarate + O2 = trans-4-hydroxy-L-prolyl-[hypoxia-inducible factor alpha subunit] + succinate + CO2. Following exposure to hypoxia, activated in HeLa cells but not in cardiovascular cells. Its function is as follows. Cellular oxygen sensor that catalyzes, under normoxic conditions, the post-translational formation of 4-hydroxyproline in hypoxia-inducible factor (HIF) alpha proteins. Hydroxylates a specific proline found in each of the oxygen-dependent degradation (ODD) domains (N-terminal, NODD, and C-terminal, CODD) of HIF1A. Also hydroxylates HIF2A. Has a preference for the CODD site for both HIF1A and HIF1B. Hydroxylated HIFs are then targeted for proteasomal degradation via the von Hippel-Lindau ubiquitination complex. Under hypoxic conditions, the hydroxylation reaction is attenuated allowing HIFs to escape degradation resulting in their translocation to the nucleus, heterodimerization with HIF1B, and increased expression of hypoxy-inducible genes. EGLN1 is the most important isozyme under normoxia and, through regulating the stability of HIF1, involved in various hypoxia-influenced processes such as angiogenesis in retinal and cardiac functionality. Target proteins are preferentially recognized via a LXXLAP motif. The protein is Egl nine homolog 1 of Homo sapiens (Human).